Reading from the N-terminus, the 301-residue chain is Securin (301 aa).

Disordered regions lie at residues 1–55 (MLPR…RTVL), 82–120 (DSPTILEPNSQGISRSAVQERSKRLSASPRRSSLTDTPL), and 218–284 (ASDQ…RSIH). Positions 33–36 (RAPL) match the D-box 1 motif. Over residues 38–50 (STKQSNAPSSVTV) the composition is skewed to polar residues. The D-box 2 motif lies at 52 to 55 (RTVL). 3 stretches are compositionally biased toward polar residues: residues 88–98 (EPNSQGISRSA), 110–119 (PRRSSLTDTP), and 231–245 (VSKQSSSRTRLSTVY). 2 repeats span residues 250–260 (ASGKSIPRPLS) and 270–280 (ASGNSRRRPLS).

It belongs to the securin family. In terms of assembly, interacts with the caspase-like cut1, and prevents its protease activity probably by covering its active site. Post-translationally, ubiquitinated by the anaphase promoting complex (APC) at the onset of anaphase, conducting to its degradation.

It is found in the cytoplasm. The protein localises to the nucleus. Functionally, regulatory protein, which plays a central role in chromosome stability. Probably acts by blocking the action of key proteins. During the mitosis, it blocks separase/cut1 function, preventing the proteolysis of the cohesin complex and the subsequent segregation of the chromosomes. At the onset of anaphase, it is ubiquitinated, conducting to its destruction and to the liberation of cut1. This is Securin (cut2) from Schizosaccharomyces pombe (strain 972 / ATCC 24843) (Fission yeast).